The chain runs to 391 residues: Multidrug resistance protein MdtL (391 aa).

At Met1–Arg3 the chain is on the cytoplasmic side. The chain crosses the membrane as a helical span at residues Phe4–Val24. Residues Gly25–His41 are Periplasmic-facing. A helical transmembrane segment spans residues Ile42 to Ala62. The Cytoplasmic segment spans residues Asp63–Lys68. Residues Pro69–Glu89 traverse the membrane as a helical segment. Over Thr90–Ala92 the chain is Periplasmic. A helical membrane pass occupies residues Leu93 to Phe113. The Cytoplasmic segment spans residues Ala114–Ser130. A helical transmembrane segment spans residues Leu131 to Met151. Residues Leu152–Gln157 are Periplasmic-facing. The chain crosses the membrane as a helical span at residues Ser158–Leu178. Over Lys179–Arg202 the chain is Cytoplasmic. A helical membrane pass occupies residues Phe203–Val222. Residues Asn223–Met244 lie on the Periplasmic side of the membrane. Residues Ala245–Phe265 traverse the membrane as a helical segment. The Cytoplasmic segment spans residues Lys266 to Arg268. Residues Thr269–Pro289 form a helical membrane-spanning segment. The Periplasmic segment spans residues Ser290–Ala292. The chain crosses the membrane as a helical span at residues Val293–Met313. Over Ser314 to Thr330 the chain is Cytoplasmic. Residues Leu331–Ile351 traverse the membrane as a helical segment. Topologically, residues Gly352–Asn355 are periplasmic. Residues Met356–Ala376 form a helical membrane-spanning segment. Over Pro377–Ala391 the chain is Cytoplasmic.

It belongs to the major facilitator superfamily. DHA1 family. MdtL (TC 2.A.1.2.22) subfamily.

The protein localises to the cell inner membrane. Functionally, confers resistance to chloramphenicol. The protein is Multidrug resistance protein MdtL of Escherichia coli O6:K15:H31 (strain 536 / UPEC).